The primary structure comprises 236 residues: Ribonuclease HII (236 aa).

One can recognise an RNase H type-2 domain in the interval Arg27–Pro219. Positions 33, 34, and 128 each coordinate a divalent metal cation. Residues Arg212–Asp236 form a disordered region.

This sequence belongs to the RNase HII family. Requires Mn(2+) as cofactor. The cofactor is Mg(2+).

The protein localises to the cytoplasm. The enzyme catalyses Endonucleolytic cleavage to 5'-phosphomonoester.. Endonuclease that specifically degrades the RNA of RNA-DNA hybrids. This chain is Ribonuclease HII, found in Ralstonia nicotianae (strain ATCC BAA-1114 / GMI1000) (Ralstonia solanacearum).